A 392-amino-acid polypeptide reads, in one-letter code: Histidinol-phosphate aminotransferase 2 (392 aa).

K228 carries the N6-(pyridoxal phosphate)lysine modification.

It belongs to the class-II pyridoxal-phosphate-dependent aminotransferase family. Histidinol-phosphate aminotransferase subfamily. Homodimer. The cofactor is pyridoxal 5'-phosphate.

The enzyme catalyses L-histidinol phosphate + 2-oxoglutarate = 3-(imidazol-4-yl)-2-oxopropyl phosphate + L-glutamate. It participates in amino-acid biosynthesis; L-histidine biosynthesis; L-histidine from 5-phospho-alpha-D-ribose 1-diphosphate: step 7/9. This is Histidinol-phosphate aminotransferase 2 from Nitrosospira multiformis (strain ATCC 25196 / NCIMB 11849 / C 71).